Here is an 858-residue protein sequence, read N- to C-terminus: Leucine--tRNA ligase (858 aa).

A 'HIGH' region motif is present at residues 42-52 (PYPSGRLHMGH). The short motif at 618 to 622 (KMSKS) is the 'KMSKS' region element. Lysine 621 serves as a coordination point for ATP.

Belongs to the class-I aminoacyl-tRNA synthetase family.

The protein resides in the cytoplasm. The catalysed reaction is tRNA(Leu) + L-leucine + ATP = L-leucyl-tRNA(Leu) + AMP + diphosphate. This chain is Leucine--tRNA ligase, found in Aliivibrio fischeri (strain ATCC 700601 / ES114) (Vibrio fischeri).